A 155-amino-acid polypeptide reads, in one-letter code: MLLVAFKDPRITRIAKVNLIGGQAKPGPQLASIGINMGEFTKQFNDQTKDKNGEVIPCIITAFKDKSFTFEIKTTPVTMLLKKAANIKVGAKNSKTETVATISREKALEIAKTKLVDTNANDEEAVLRMVAGSAKQMGIKIEGVDPVVHKDGKKK.

It belongs to the universal ribosomal protein uL11 family. Part of the ribosomal stalk of the 50S ribosomal subunit. Interacts with L10 and the large rRNA to form the base of the stalk. L10 forms an elongated spine to which L12 dimers bind in a sequential fashion forming a multimeric L10(L12)X complex. One or more lysine residues are methylated.

Functionally, forms part of the ribosomal stalk which helps the ribosome interact with GTP-bound translation factors. This is Large ribosomal subunit protein uL11 from Malacoplasma penetrans (strain HF-2) (Mycoplasma penetrans).